We begin with the raw amino-acid sequence, 559 residues long: Leucine-rich repeat-containing protein 71 (559 aa).

The segment covering Met1–Gly18 has biased composition (low complexity). Residues Met1 to Tyr56 are disordered. Residues Lys28–Pro38 are compositionally biased toward basic and acidic residues. LRR repeat units follow at residues Asn172–Cys193, Thr196–Met216, Thr221–Gly241, Thr253–Asp266, and Ser281–Glu302. 2 stretches are compositionally biased toward basic and acidic residues: residues Lys324–Ser348 and Lys380–Leu391. The tract at residues Lys324–Gly427 is disordered.

This chain is Leucine-rich repeat-containing protein 71 (LRRC71), found in Homo sapiens (Human).